The chain runs to 606 residues: Elongation factor 4 (606 aa).

In terms of domain architecture, tr-type G spans 7–189; the sequence is SRIRNFCIIA…AVVDRVPPPK (183 aa). GTP-binding positions include 19-24 and 136-139; these read DHGKST and NKID.

It belongs to the TRAFAC class translation factor GTPase superfamily. Classic translation factor GTPase family. LepA subfamily.

The protein localises to the cell inner membrane. The enzyme catalyses GTP + H2O = GDP + phosphate + H(+). Its function is as follows. Required for accurate and efficient protein synthesis under certain stress conditions. May act as a fidelity factor of the translation reaction, by catalyzing a one-codon backward translocation of tRNAs on improperly translocated ribosomes. Back-translocation proceeds from a post-translocation (POST) complex to a pre-translocation (PRE) complex, thus giving elongation factor G a second chance to translocate the tRNAs correctly. Binds to ribosomes in a GTP-dependent manner. The polypeptide is Elongation factor 4 (Synechococcus sp. (strain CC9605)).